Consider the following 337-residue polypeptide: 4-hydroxyproline 2-epimerase (337 aa).

Catalysis depends on C91, which acts as the Proton acceptor. Residues G92–H93, D252, and G257–T258 each bind substrate.

Belongs to the proline racemase family.

The enzyme catalyses trans-4-hydroxy-L-proline = cis-4-hydroxy-D-proline. In terms of biological role, catalyzes the epimerization of trans-4-hydroxy-L-proline (t4LHyp) to cis-4-hydroxy-D-proline (c4DHyp). Is involved in a degradation pathway that converts t4LHyp to alpha-ketoglutarate, which allows R.sphaeroides to grow on t4LHyp as a sole carbon source. Displays no proline racemase activity. This Cereibacter sphaeroides (strain ATCC 17023 / DSM 158 / JCM 6121 / CCUG 31486 / LMG 2827 / NBRC 12203 / NCIMB 8253 / ATH 2.4.1.) (Rhodobacter sphaeroides) protein is 4-hydroxyproline 2-epimerase.